A 356-amino-acid polypeptide reads, in one-letter code: 3'-5' exonuclease (356 aa).

The disordered stretch occupies residues 1–120 (MDKYLIKMPT…TPSPEKEKPE (120 aa)). Composition is skewed to basic and acidic residues over residues 29–56 (TIDK…ENTP) and 71–85 (KNQD…IKNE). Low complexity predominate over residues 99–113 (LTRSTRSMAEEGTPS). 2 positions are modified to phosphoserine: Ser105 and Ser113. One can recognise a 3'-5' exonuclease domain in the interval 155–316 (TTLDVVPMAF…GQVIYRDLEQ (162 aa)). Mg(2+) contacts are provided by Asp165, Glu167, and Asp303.

It belongs to the WRNexo family.

The protein resides in the nucleus. Its function is as follows. Has exonuclease activity on both single-stranded and duplex templates bearing overhangs, but not blunt ended duplex DNA, and cleaves in a 3'-5' direction. Essential for the formation of DNA replication focal centers. Has an important role in maintaining genome stability. This chain is 3'-5' exonuclease, found in Drosophila willistoni (Fruit fly).